A 917-amino-acid chain; its full sequence is Isoleucine--tRNA ligase (917 aa).

The 'HIGH' region motif lies at 57-67; the sequence is PYANGNLHMGH. Glu-554 is a binding site for L-isoleucyl-5'-AMP. The 'KMSKS' region motif lies at 595–599; the sequence is KMSKS. ATP is bound at residue Lys-598. Zn(2+)-binding residues include Cys-886, Cys-889, Cys-906, and Cys-909.

The protein belongs to the class-I aminoacyl-tRNA synthetase family. IleS type 1 subfamily. As to quaternary structure, monomer. Zn(2+) serves as cofactor.

Its subcellular location is the cytoplasm. The catalysed reaction is tRNA(Ile) + L-isoleucine + ATP = L-isoleucyl-tRNA(Ile) + AMP + diphosphate. Catalyzes the attachment of isoleucine to tRNA(Ile). As IleRS can inadvertently accommodate and process structurally similar amino acids such as valine, to avoid such errors it has two additional distinct tRNA(Ile)-dependent editing activities. One activity is designated as 'pretransfer' editing and involves the hydrolysis of activated Val-AMP. The other activity is designated 'posttransfer' editing and involves deacylation of mischarged Val-tRNA(Ile). This is Isoleucine--tRNA ligase (ileS) from Staphylococcus aureus (strain MSSA476).